The following is a 235-amino-acid chain: Large ribosomal subunit protein uL1 (235 aa).

The protein belongs to the universal ribosomal protein uL1 family. In terms of assembly, part of the 50S ribosomal subunit.

Functionally, binds directly to 23S rRNA. The L1 stalk is quite mobile in the ribosome, and is involved in E site tRNA release. Its function is as follows. Protein L1 is also a translational repressor protein, it controls the translation of the L11 operon by binding to its mRNA. This chain is Large ribosomal subunit protein uL1, found in Mycolicibacterium smegmatis (strain ATCC 700084 / mc(2)155) (Mycobacterium smegmatis).